Reading from the N-terminus, the 252-residue chain is NAP1-related protein 2 (252 aa).

Basic and acidic residues predominate over residues 1 to 15 (MTAPADKGKKAKTDA). Residues 1-23 (MTAPADKGKKAKTDADGGAAEEN) form a disordered region. Positions 26–67 (IDGALVLSIEKLQEIQDELEKVNEEASDKVLEVEQKYSEIRR) form a coiled coil. Residues 222-252 (YFNNEAEELGEDDDEEGSDADEGEEDEEEEN) form a disordered region. Positions 226 to 252 (EAEELGEDDDEEGSDADEGEEDEEEEN) are enriched in acidic residues.

It belongs to the nucleosome assembly protein (NAP) family.

The protein resides in the nucleus. It is found in the cytoplasm. In terms of biological role, acts as a histone H2A/H2B chaperone in nucleosome assembly. The polypeptide is NAP1-related protein 2 (Oryza sativa subsp. indica (Rice)).